The following is a 390-amino-acid chain: tRNA (guanine(9)-N1)-methyltransferase (390 aa).

Positions Met1–Ala72 are disordered. Basic and acidic residues predominate over residues Ala43–Arg59. Residues Lys92–Pro340 enclose the SAM-dependent MTase TRM10-type domain. S-adenosyl-L-methionine-binding positions include Leu246–Ser247, Gly266, Asp270–His274, Cys278, Leu292, and Lys305–Leu307. The active-site Proton acceptor is Asp270. Residues Lys343–Gln390 are disordered. Basic and acidic residues predominate over residues Ala347–Lys356. Residues Glu357 to Gln390 show a composition bias toward acidic residues.

Belongs to the class IV-like SAM-binding methyltransferase superfamily. TRM10 family. As to quaternary structure, monomer.

It is found in the cytoplasm. The protein resides in the nucleus. The catalysed reaction is guanosine(9) in tRNA + S-adenosyl-L-methionine = N(1)-methylguanosine(9) in tRNA + S-adenosyl-L-homocysteine + H(+). Its function is as follows. S-adenosyl-L-methionine-dependent guanine N(1)-methyltransferase that catalyzes the formation of N(1)-methylguanine at position 9 (m1G9) in cytoplasmic tRNA. The polypeptide is tRNA (guanine(9)-N1)-methyltransferase (Cryptococcus neoformans var. neoformans serotype D (strain JEC21 / ATCC MYA-565) (Filobasidiella neoformans)).